The chain runs to 143 residues: Ribosome-binding factor A (143 aa).

Residues 123-143 (DKSLQENYKQNDKETKAEKLR) form a disordered region.

The protein belongs to the RbfA family. Monomer. Binds 30S ribosomal subunits, but not 50S ribosomal subunits or 70S ribosomes.

It localises to the cytoplasm. One of several proteins that assist in the late maturation steps of the functional core of the 30S ribosomal subunit. Associates with free 30S ribosomal subunits (but not with 30S subunits that are part of 70S ribosomes or polysomes). Required for efficient processing of 16S rRNA. May interact with the 5'-terminal helix region of 16S rRNA. In Francisella tularensis subsp. novicida (strain U112), this protein is Ribosome-binding factor A.